The primary structure comprises 105 residues: MIYSTTESIPGKEIEEIVGVVTGNVVQAKHIGRDIMAGLKSIVGGEIRGYTEMLTDARDIAIQRLVANAEEKGADAVVGIRFTTSAIMDGSSEIMVFGTAVKLKK.

It belongs to the UPF0145 family.

The polypeptide is UPF0145 protein CPS_2458 (Colwellia psychrerythraea (strain 34H / ATCC BAA-681) (Vibrio psychroerythus)).